The sequence spans 365 residues: Alanine racemase (365 aa).

Catalysis depends on Lys35, which acts as the Proton acceptor; specific for D-alanine. Lys35 is subject to N6-(pyridoxal phosphate)lysine. Arg130 is a binding site for substrate. The active-site Proton acceptor; specific for L-alanine is the Tyr256. A substrate-binding site is contributed by Met304.

It belongs to the alanine racemase family. Pyridoxal 5'-phosphate is required as a cofactor.

It catalyses the reaction L-alanine = D-alanine. It functions in the pathway amino-acid biosynthesis; D-alanine biosynthesis; D-alanine from L-alanine: step 1/1. In terms of biological role, catalyzes the interconversion of L-alanine and D-alanine. May also act on other amino acids. The chain is Alanine racemase (alr) from Acidovorax sp. (strain JS42).